Reading from the N-terminus, the 315-residue chain is Ribosomal RNA small subunit methyltransferase H (315 aa).

Residues 37–39, aspartate 57, phenylalanine 83, aspartate 105, and glutamine 112 contribute to the S-adenosyl-L-methionine site; that span reads GGH.

Belongs to the methyltransferase superfamily. RsmH family.

The protein localises to the cytoplasm. The catalysed reaction is cytidine(1402) in 16S rRNA + S-adenosyl-L-methionine = N(4)-methylcytidine(1402) in 16S rRNA + S-adenosyl-L-homocysteine + H(+). Functionally, specifically methylates the N4 position of cytidine in position 1402 (C1402) of 16S rRNA. In Pseudomonas fluorescens (strain ATCC BAA-477 / NRRL B-23932 / Pf-5), this protein is Ribosomal RNA small subunit methyltransferase H.